We begin with the raw amino-acid sequence, 505 residues long: L-carnitine/gamma-butyrobetaine antiporter (505 aa).

The next 12 membrane-spanning stretches (helical) occupy residues Ile-10–Val-30, Ile-50–Val-70, Ile-92–Ile-112, Gly-143–Val-163, Phe-195–Val-215, Leu-231–Leu-251, Ser-263–Met-283, Trp-316–Ala-336, Leu-347–Gly-367, Leu-403–Ile-423, Leu-446–Leu-466, and Ala-475–Ile-495.

The protein belongs to the BCCT transporter (TC 2.A.15) family. CaiT subfamily. As to quaternary structure, homotrimer.

It localises to the cell inner membrane. The enzyme catalyses 4-(trimethylamino)butanoate(in) + (R)-carnitine(out) = 4-(trimethylamino)butanoate(out) + (R)-carnitine(in). Its pathway is amine and polyamine metabolism; carnitine metabolism. Its function is as follows. Catalyzes the exchange of L-carnitine for gamma-butyrobetaine. The protein is L-carnitine/gamma-butyrobetaine antiporter of Salmonella arizonae (strain ATCC BAA-731 / CDC346-86 / RSK2980).